A 341-amino-acid chain; its full sequence is Zinc transporter ZIP11 (341 aa).

A run of 7 helical transmembrane segments spans residues 12-32 (LLGTFFTWGLTAAGAALVFVF), 44-64 (LGFAAGVMLAASYWSLLAPAV), 72-92 (GFGSLAFLPVAIGFTLGAAFV), 193-213 (IALLILAITIHNIPEGLAVGV), 262-284 (FWYGQLSGMVEPLAGVFGAFAVV), 289-306 (ILPYALAFAAGAMVYVIM), and 321-341 (LASWASILGFVVMMSLDVGLG).

It belongs to the ZIP transporter (TC 2.A.5) family.

The protein localises to the cell membrane. It localises to the nucleus. The protein resides in the cytoplasm. It is found in the golgi apparatus. It carries out the reaction Zn(2+)(in) = Zn(2+)(out). The catalysed reaction is Cu(2+)(in) = Cu(2+)(out). Functionally, zinc importer that regulates cytosolic zinc concentrations either via zinc influx from the extracellular compartment or efflux from intracellular organelles such as Golgi apparatus. May transport copper ions as well. The transport mechanism remains to be elucidated. The chain is Zinc transporter ZIP11 (SLC39A11) from Bos taurus (Bovine).